Here is a 342-residue protein sequence, read N- to C-terminus: MEHQVRCAVLGLGRLGYYHAKNLVTSVPGAKLVCVGDPLKGRAEQVARELGIEKWSEDPYEVLEDPGIDAVIIVTPTSTHGDMIIKAAENGKQIFVEKPLTLSLEESKAASEKVKETGVICQVGFMRRFDPAYADAKRRIDAGEIGKPIYYKGFTRDQGAPPAEFIKHSGGIFIDCSIHDYDIARYLLGAEITSVSGHGRILNNPFMEQYGDVDQALTYIEFDSGAAGDVEASRTSPYGHDIRAEVIGTEGSIFIGTLRHQHVTILSAKGSSFDIIPDFQTRFHEAYCLELQHFAECVRNGKTPIVTDIDATINLEVGIAATNSFRNGMPVQLDVKRAYTGM.

It belongs to the Gfo/Idh/MocA family.

It carries out the reaction scyllo-inositol + NAD(+) = scyllo-inosose + NADH + H(+). It participates in polyol metabolism. Its function is as follows. Catalyzes the reversible NAD(+)-dependent oxidation of scyllo-inositol (SI) to 2,4,6/3,5-pentahydroxycyclohexanone (scyllo-inosose or SIS). Is required for SI catabolism that allows B.subtilis to utilize SI as the sole carbon source for growth. Cannot use NADP(+) instead of NAD(+). The polypeptide is scyllo-inositol 2-dehydrogenase (NAD(+)) (Bacillus subtilis (strain 168)).